A 245-amino-acid chain; its full sequence is Transcriptional regulatory protein VxrB (245 aa).

The 112-residue stretch at 31–142 folds into the Response regulatory domain; the sequence is TLLLVEDDKN…ELFARIRAQL (112 aa). The residue at position 78 (Asp78) is a 4-aspartylphosphate. Positions 151-245 form a DNA-binding region, ompR/PhoB-type; the sequence is DSKVVTSNLT…LRGVGYKMKA (95 aa).

Post-translationally, phosphorylated by VxrA.

Its subcellular location is the cytoplasm. Functionally, member of the two-component regulatory system VxrB/VxrA involved in the regulation of diverses processes, including virulence, the type VI secretion system (T6SS) and biofilm formation. VxrB positively regulates the expression of the T6SS, a virulence nanomachine that directly translocates effectors into bacterial or host cells, thereby facilitating colonization by competing with sister cells and intestinal microbiota. In addition, it activates vpsL expression and biofilm formation, and represses motility. May regulate biofilm formation via its regulation of key biofilm regulators and cyclic di-GMP levels. Significantly contributes to both attack and defense via T6SS, while also influencing competition via regulation of biofilm matrix production. Is critical for colonization in the infant mouse model. The protein is Transcriptional regulatory protein VxrB of Vibrio cholerae serotype O1 (strain ATCC 39315 / El Tor Inaba N16961).